Reading from the N-terminus, the 173-residue chain is Ribosome maturation factor RimP (173 aa).

It belongs to the RimP family.

It localises to the cytoplasm. In terms of biological role, required for maturation of 30S ribosomal subunits. The protein is Ribosome maturation factor RimP of Chlorobaculum tepidum (strain ATCC 49652 / DSM 12025 / NBRC 103806 / TLS) (Chlorobium tepidum).